A 176-amino-acid polypeptide reads, in one-letter code: MRTVSAPSAVALVVIVAAGLAWTSLASVAPPAPAPGSEETCGTVVRALMPCLPFVQGKEKEPSKGCCSGAKRLDGETKTGLQRVHACECIQTAMKTYSDIDGKLVSEVPKHCGIVDSKLPPIDVNMDCKTLGVVPRQPQLPVSLRHGPVTGPSDPAHKARLERPQIRVPPPAPEKA.

The first 37 residues, 1–37 (MRTVSAPSAVALVVIVAAGLAWTSLASVAPPAPAPGS), serve as a signal peptide directing secretion. 4 disulfide bridges follow: Cys41-Cys89, Cys51-Cys66, Cys67-Cys112, and Cys87-Cys128. Residues 139 to 176 (QLPVSLRHGPVTGPSDPAHKARLERPQIRVPPPAPEKA) form a disordered region. Over residues 155-165 (PAHKARLERPQ) the composition is skewed to basic and acidic residues. Pro residues predominate over residues 167 to 176 (RVPPPAPEKA).

The protein belongs to the plant LTP family.

Plant non-specific lipid-transfer proteins transfer phospholipids as well as galactolipids across membranes. May play a role in wax or cutin deposition in the cell walls of expanding epidermal cells and certain secretory tissues. In Parietaria judaica (Pellitory-of-the-wall), this protein is Probable non-specific lipid-transfer protein 1.